We begin with the raw amino-acid sequence, 138 residues long: uncharacterized protein (138 aa).

Positions 1–37 (MNSTFTSQPLLNRSEPRVFKEFYRLVIGCNPAWQVMA) are cleaved as a signal peptide.

This sequence to H.influenzae HI_1631.

This is an uncharacterized protein from Sinorhizobium fredii (strain NBRC 101917 / NGR234).